The following is a 572-amino-acid chain: AAA ATPase forming ring-shaped complexes (572 aa).

A compositionally biased stretch (low complexity) spans 1 to 18; it reads MTTASQQTSSHSTASSTS. A disordered region spans residues 1 to 30; sequence MTTASQQTSSHSTASSTSRKGNNNDATPSL. Positions 42-70 form a coiled coil; it reads TRNAKLVEMLKASRDKLDALNEQIRALSD. 258-263 provides a ligand contact to ATP; sequence GCGKTL. Residues 543-572 are disordered; sequence VAHHNRKTTTETEATEPEGTDSGKGHTDAS. The span at 563–572 shows a compositional bias: basic and acidic residues; sequence DSGKGHTDAS.

Belongs to the AAA ATPase family. As to quaternary structure, homohexamer. Assembles into a hexameric ring structure.

This is AAA ATPase forming ring-shaped complexes from Corynebacterium kroppenstedtii (strain DSM 44385 / JCM 11950 / CIP 105744 / CCUG 35717).